We begin with the raw amino-acid sequence, 538 residues long: Syncytin-2 (538 aa).

Positions 1 to 15 (MGLLLLVLILTPSLA) are cleaved as a signal peptide. Residues 16-478 (AYRHPDFPLL…GWLNWEGTWK (463 aa)) lie on the Extracellular side of the membrane. Residues 43–46 (CWLC) carry the CXXC motif. Cystine bridges form between Cys43–Cys46, Cys43–Cys439, and Cys431–Cys438. 8 N-linked (GlcNAc...) asparagine glycosylation sites follow: Asn133, Asn146, Asn177, Asn220, Asn241, Asn247, Asn312, and Asn332. Positions 354–374 (FIPLLAGLGILAGTGTGIAGI) are fusion peptide. The short motif at 414 to 430 (LQNRRGLDMLTAAQGGI) is the CKS-17 element. The short motif at 431 to 439 (CLALDEKCC) is the CX6CC element. Asn443 carries N-linked (GlcNAc...) asparagine glycosylation. A helical membrane pass occupies residues 479 to 499 (WFSWVLPLTGPLVSLLLLLLF). Topologically, residues 500 to 538 (GPCLLNLITQFVSSRLQAIKLQTNLSAGRHPRNIQESPF) are cytoplasmic.

It belongs to the gamma type-C retroviral envelope protein family. HERV class-I FRD env subfamily. The surface and transmembrane proteins form a heterodimer. They are attached by non-covalent interactions or by a labile interchain disulfide bond. In terms of processing, specific enzymatic cleavages in vivo yield the mature SU and TM proteins. The CXXC motif is highly conserved across a broad range of retroviral envelope proteins. It is thought to participate in the formation of a labile disulfide bond possibly with the CX6CC motif present in the transmembrane protein.

Its subcellular location is the virion. The protein localises to the cell membrane. Functionally, this endogenous retroviral envelope protein has retained its original fusogenic properties and participates in trophoblast fusion and the formation of a syncytium during placenta morphogenesis. The interaction with MFSD2A is apparently important for this process. In terms of biological role, endogenous envelope proteins may have kept, lost or modified their original function during evolution but this one can still make pseudotypes with MLV, HIV-1 or SIV-1 virions and confer infectivity. Retroviral envelope proteins mediate receptor recognition and membrane fusion during early infection. The surface protein mediates receptor recognition, while the transmembrane protein anchors the envelope heterodimer to the viral membrane through one transmembrane domain. The other hydrophobic domain, called fusion peptide, mediates fusion of the viral membrane with the target cell membrane. The chain is Syncytin-2 (ERVFRD-1) from Pan troglodytes (Chimpanzee).